The following is a 415-amino-acid chain: L-threonine dehydratase biosynthetic IlvA (415 aa).

Position 53 is an N6-(pyridoxal phosphate)lysine (K53). Residues N80, 183–187 (GGGGL), and S308 each bind pyridoxal 5'-phosphate. The ACT-like domain maps to 332 to 406 (HYFIIQFPQR…KGFEYREINK (75 aa)).

The protein belongs to the serine/threonine dehydratase family. In terms of assembly, homotetramer. Requires pyridoxal 5'-phosphate as cofactor.

The catalysed reaction is L-threonine = 2-oxobutanoate + NH4(+). The protein operates within amino-acid biosynthesis; L-isoleucine biosynthesis; 2-oxobutanoate from L-threonine: step 1/1. In terms of biological role, catalyzes the anaerobic formation of alpha-ketobutyrate and ammonia from threonine in a two-step reaction. The first step involved a dehydration of threonine and a production of enamine intermediates (aminocrotonate), which tautomerizes to its imine form (iminobutyrate). Both intermediates are unstable and short-lived. The second step is the nonenzymatic hydrolysis of the enamine/imine intermediates to form 2-ketobutyrate and free ammonia. In the low water environment of the cell, the second step is accelerated by RidA. The polypeptide is L-threonine dehydratase biosynthetic IlvA (ilvA) (Halalkalibacterium halodurans (strain ATCC BAA-125 / DSM 18197 / FERM 7344 / JCM 9153 / C-125) (Bacillus halodurans)).